A 314-amino-acid chain; its full sequence is D-alanine--D-alanine ligase (314 aa).

The 196-residue stretch at 112-307 (KQVWQSLGLP…FQQLVLSILD (196 aa)) folds into the ATP-grasp domain. 138–193 (AQMLGFPLIVKPAHEGSSIGMAKVGDVAELIAAWRAASAYDAQVLVEQWIQGPEFT) lines the ATP pocket. Residues Asp261, Glu274, and Asn276 each contribute to the Mg(2+) site.

It belongs to the D-alanine--D-alanine ligase family. The cofactor is Mg(2+). Requires Mn(2+) as cofactor.

The protein resides in the cytoplasm. The catalysed reaction is 2 D-alanine + ATP = D-alanyl-D-alanine + ADP + phosphate + H(+). It participates in cell wall biogenesis; peptidoglycan biosynthesis. Functionally, cell wall formation. The polypeptide is D-alanine--D-alanine ligase (Stutzerimonas stutzeri (strain A1501) (Pseudomonas stutzeri)).